Consider the following 648-residue polypeptide: Shugoshin (648 aa).

Coiled coils occupy residues L95–V122 and D208–A273. 5 disordered regions span residues K188 to R239, E262 to A334, V367 to R443, T483 to D518, and H628 to T648. 2 stretches are compositionally biased toward basic and acidic residues: residues V200–A217 and E262–A273. Residues A306–E315 show a composition bias toward polar residues. Composition is skewed to basic and acidic residues over residues I424 to R440 and Q490 to D509.

It belongs to the shugoshin family.

It localises to the nucleus. It is found in the chromosome. Its subcellular location is the centromere. Plays a central role in chromosome cohesion during cell division by preventing premature dissociation of cohesin complex from centromeres after prophase, when most of cohesin complex dissociates from chromosomes arms. May act by protecting RAD21 and or REC8 from cleavage by ESP1/separase. In Eremothecium gossypii (strain ATCC 10895 / CBS 109.51 / FGSC 9923 / NRRL Y-1056) (Yeast), this protein is Shugoshin (SGO1).